Reading from the N-terminus, the 215-residue chain is 3-isopropylmalate dehydratase small subunit (215 aa).

The protein belongs to the LeuD family. LeuD type 1 subfamily. As to quaternary structure, heterodimer of LeuC and LeuD.

The catalysed reaction is (2R,3S)-3-isopropylmalate = (2S)-2-isopropylmalate. Its pathway is amino-acid biosynthesis; L-leucine biosynthesis; L-leucine from 3-methyl-2-oxobutanoate: step 2/4. Functionally, catalyzes the isomerization between 2-isopropylmalate and 3-isopropylmalate, via the formation of 2-isopropylmaleate. This chain is 3-isopropylmalate dehydratase small subunit, found in Xanthomonas oryzae pv. oryzae (strain MAFF 311018).